Reading from the N-terminus, the 558-residue chain is Formate--tetrahydrofolate ligase (558 aa).

66 to 73 (TPAGEGKT) contributes to the ATP binding site.

Belongs to the formate--tetrahydrofolate ligase family.

The enzyme catalyses (6S)-5,6,7,8-tetrahydrofolate + formate + ATP = (6R)-10-formyltetrahydrofolate + ADP + phosphate. Its pathway is one-carbon metabolism; tetrahydrofolate interconversion. This is Formate--tetrahydrofolate ligase from Clostridioides difficile (strain 630) (Peptoclostridium difficile).